We begin with the raw amino-acid sequence, 200 residues long: Peptidyl-tRNA hydrolase (200 aa).

Tyr-15 is a binding site for tRNA. The Proton acceptor role is filled by His-20. TRNA is bound by residues Phe-66, Asn-68, and Asn-114.

This sequence belongs to the PTH family. In terms of assembly, monomer.

Its subcellular location is the cytoplasm. The catalysed reaction is an N-acyl-L-alpha-aminoacyl-tRNA + H2O = an N-acyl-L-amino acid + a tRNA + H(+). Hydrolyzes ribosome-free peptidyl-tRNAs (with 1 or more amino acids incorporated), which drop off the ribosome during protein synthesis, or as a result of ribosome stalling. Its function is as follows. Catalyzes the release of premature peptidyl moieties from peptidyl-tRNA molecules trapped in stalled 50S ribosomal subunits, and thus maintains levels of free tRNAs and 50S ribosomes. This Ralstonia nicotianae (strain ATCC BAA-1114 / GMI1000) (Ralstonia solanacearum) protein is Peptidyl-tRNA hydrolase.